A 480-amino-acid polypeptide reads, in one-letter code: Glutamate--tRNA ligase (480 aa).

The short motif at Pro-9–Thr-19 is the 'HIGH' region element. The 'KMSKS' region motif lies at Lys-250–Arg-254. Lys-253 provides a ligand contact to ATP.

This sequence belongs to the class-I aminoacyl-tRNA synthetase family. Glutamate--tRNA ligase type 1 subfamily. In terms of assembly, monomer.

The protein localises to the cytoplasm. It catalyses the reaction tRNA(Glu) + L-glutamate + ATP = L-glutamyl-tRNA(Glu) + AMP + diphosphate. Functionally, catalyzes the attachment of glutamate to tRNA(Glu) in a two-step reaction: glutamate is first activated by ATP to form Glu-AMP and then transferred to the acceptor end of tRNA(Glu). The chain is Glutamate--tRNA ligase from Microcystis aeruginosa (strain NIES-843 / IAM M-2473).